The chain runs to 640 residues: Spindle assembly abnormal protein 6 homolog (640 aa).

One can recognise a PISA domain in the interval 40-92 (VHKKDLAVRLTDDADPFFLYNLVISEEDFQSLKSQQGLLVDFSAFPQKFIDLL). Positions 154–475 (LARCLKCLKE…KQLLKTNENV (322 aa)) form a coiled coil.

Nine homodimers form a cartwheel structure with an internal diameter of 23 nM and radial spokes connecting to the microtubule triplets.

It localises to the cytoplasm. The protein resides in the cytoskeleton. It is found in the microtubule organizing center. The protein localises to the centrosome. Its function is as follows. Central scaffolding component of the centrioles ensuring their 9-fold symmetry. Required for centrosome biogenesis and duplication: required both for mother-centriole-dependent centriole duplication and deuterosome-dependent centriole amplification in multiciliated cells. The protein is Spindle assembly abnormal protein 6 homolog (SASS6) of Gallus gallus (Chicken).